The sequence spans 304 residues: Glycosyltransferase AglE (304 aa).

It belongs to the glycosyltransferase 2 family.

The protein localises to the cell membrane. The protein operates within cell surface structure biogenesis; S-layer biogenesis. Functionally, involved in the assembly of a N-linked pentasaccharide that decorates the S-layer glycoprotein and flagellins. Catalyzes the addition to the dolichol phosphate carrier of the hexuronic acid found at position 4 of the pentasaccharide. This chain is Glycosyltransferase AglE (aglE), found in Haloferax volcanii (strain ATCC 29605 / DSM 3757 / JCM 8879 / NBRC 14742 / NCIMB 2012 / VKM B-1768 / DS2) (Halobacterium volcanii).